The chain runs to 417 residues: Serine hydroxymethyltransferase (417 aa).

Lys54 carries the N6-acetyllysine modification. Residues Leu121 and 125–127 (GHL) each bind (6S)-5,6,7,8-tetrahydrofolate. Lys229 carries the post-translational modification N6-(pyridoxal phosphate)lysine. Lys250, Lys285, and Lys354 each carry N6-acetyllysine. Position 355 to 357 (355 to 357 (SPF)) interacts with (6S)-5,6,7,8-tetrahydrofolate. Lys375 is subject to N6-acetyllysine.

Belongs to the SHMT family. Homodimer. It depends on pyridoxal 5'-phosphate as a cofactor.

The protein resides in the cytoplasm. The enzyme catalyses (6R)-5,10-methylene-5,6,7,8-tetrahydrofolate + glycine + H2O = (6S)-5,6,7,8-tetrahydrofolate + L-serine. It participates in one-carbon metabolism; tetrahydrofolate interconversion. Its pathway is amino-acid biosynthesis; glycine biosynthesis; glycine from L-serine: step 1/1. Catalyzes the reversible interconversion of serine and glycine with tetrahydrofolate (THF) serving as the one-carbon carrier. This reaction serves as the major source of one-carbon groups required for the biosynthesis of purines, thymidylate, methionine, and other important biomolecules. Also exhibits THF-independent aldolase activity toward beta-hydroxyamino acids, producing glycine and aldehydes, via a retro-aldol mechanism. The protein is Serine hydroxymethyltransferase of Shigella sonnei (strain Ss046).